The following is a 169-amino-acid chain: Disulfide bond formation protein B 1 (169 aa).

Over 1–13 (MSALLKPLDNRLF) the chain is Cytoplasmic. A helical transmembrane segment spans residues 14–30 (WPAVAIGGLLILAFVLY). At 31–48 (LQHVRGFAPCSLCIFIRL) the chain is on the periplasmic side. A disulfide bridge connects residues Cys-40 and Cys-43. A helical transmembrane segment spans residues 49 to 64 (DVLGLVLAGIVGSLAP). Residues 65-71 (RSRIAGG) lie on the Cytoplasmic side of the membrane. Residues 72–89 (IAALGMLAASLGGIYHAW) traverse the membrane as a helical segment. Topologically, residues 90–145 (SLVAEEKLAAQGMGSCKMFMGFPEWIPLDTWLPQVFQPEGLCGEVVWTLLGQSMAV) are periplasmic. Cysteines 105 and 131 form a disulfide. A helical membrane pass occupies residues 146–164 (WSLALFVFCLLVLAAKLAF). The Cytoplasmic segment spans residues 165-169 (GRRTA).

Belongs to the DsbB family.

It is found in the cell inner membrane. In terms of biological role, required for disulfide bond formation in some periplasmic proteins. Acts by oxidizing the DsbA protein. The protein is Disulfide bond formation protein B 1 of Pseudomonas aeruginosa (strain UCBPP-PA14).